A 373-amino-acid chain; its full sequence is MGSQVSVESGALHVVIVGGGFGGIAAASQLQALNVPFMLVDMKDSFHHNVAALRASVETGFAKKTFISYSVTFKDNFRQGLVVGIDLKNQMVLLQGGEALPFSHLILATGSTGPFPGKFNEVSSQQAAIQAYEDMVRQVQRSRFIVVVGGGSAGVEMAAEIKTEYPEKEVTLIHSQVALADKELLPSVRQEVKEILLRKGVQLLLSERVSNLEELPLNEYREYIKVQTDKGTEVATNLVILCTGIKINSSAYRKAFESRLASSGALRVNEHLQVEGHSNVYAIGDCADVRTPKMAYLAGLHANIAVANIVNSVKQRPLQAYKPGALTFLLSMGRNDGVGQISGFYVGRLMVRLTKSRDLFVSTSWKTMRQSPP.

Glycine 2 carries N-myristoyl glycine lipidation. The chain crosses the membrane as a helical span at residues 7–27 (VESGALHVVIVGGGFGGIAAA). 6-hydroxy-FAD is bound by residues 18 to 22 (GGGFG), arginine 54, and valine 82. Position 168 is an N6-acetyllysine; by KAT2B (lysine 168). Aspartate 285 is a 6-hydroxy-FAD binding site.

It belongs to the FAD-dependent oxidoreductase family. As to quaternary structure, interacts with importin subunits KPNA2 and IPO5; this interaction likely mediates the translocation into the nucleus upon oxidative stress. The cofactor is 6-hydroxy-FAD. In terms of processing, N-myristoylation at Gly-2 mediates the recruitment to lipid droplets and plasma membrane, enabling its anti-lipid peroxidation activity. Post-translationally, acetylation at Lys-168 prevents AIFM2 ubiquitination and degradation, thereby inhibiting ferroptosis. KAT2B mediates acetylation at Lys-168, while HDAC3 removes it. Ubiquitinated. AIFM2 undergoes 'Lys-29'-ubiquitination and proteasomal degradation, which is inhibited by acetylation at Lys-168. In terms of tissue distribution, detected in most normal tissues as two transcripts of 1.8 and 4.0 kb in length, respectively. Highly expressed in heart, moderately in liver and skeletal muscles, and expressed at low levels in placenta, lung, kidney, and pancreas. Both transcripts expressed following p53/TP53 induction. The shorter 1.8 kb transcript seems to be the major transcript in EB1 colon cancer cells.

It is found in the lipid droplet. The protein resides in the cell membrane. The protein localises to the cytoplasm. It localises to the mitochondrion membrane. Its subcellular location is the nucleus. The enzyme catalyses ubiquinone-10 + NADH + H(+) = ubiquinol-10 + NAD(+). It carries out the reaction phylloquinone + NADH + H(+) = phylloquinol + NAD(+). The catalysed reaction is menaquinone-4 + NADH + H(+) = menaquinol-4 + NAD(+). It catalyses the reaction menadione + NADH + H(+) = menadiol + NAD(+). Its activity is regulated as follows. The modification by 4-hydroxy-2-nonenal (HNE) adduction in mitochondria results in loss of the oxidoreductase activity and activation of a novel function in mitochondrial oxidative stress signaling. Functionally, a NAD(P)H-dependent oxidoreductase that acts as a key inhibitor of ferroptosis. At the plasma membrane, catalyzes reduction of coenzyme Q/ubiquinone-10 to ubiquinol-10, a lipophilic radical-trapping antioxidant that prevents lipid oxidative damage and consequently ferroptosis. Acts in parallel to GPX4 to suppress phospholipid peroxidation and ferroptosis. This anti-ferroptotic function is independent of cellular glutathione levels. Also acts as a potent radical-trapping antioxidant by mediating warfarin-resistant vitamin K reduction in the canonical vitamin K cycle: catalyzes NAD(P)H-dependent reduction of vitamin K (phylloquinone, menaquinone-4 and menadione) to hydroquinone forms. Hydroquinones act as potent radical-trapping antioxidants inhibitor of phospholipid peroxidation and ferroptosis. May play a role in mitochondrial stress signaling. Upon oxidative stress, associates with the lipid peroxidation end product 4-hydroxy-2-nonenal (HNE) forming a lipid adduct devoid of oxidoreductase activity, which then translocates from mitochondria into the nucleus triggering DNA damage and cell death. Capable of DNA binding in a non-sequence specific way. This Homo sapiens (Human) protein is Ferroptosis suppressor protein 1.